Here is a 908-residue protein sequence, read N- to C-terminus: Glutamate receptor ionotropic, kainate 2 (908 aa).

Residues M1 to G31 form the signal peptide. The Extracellular segment spans residues T32–P561. Residues N67, N73, N275, N378, N412, N423, and N430 are each glycosylated (N-linked (GlcNAc...) asparagine). A disulfide bridge links C96 with C347. L-glutamate is bound by residues P516, A518, and R523. N-linked (GlcNAc...) asparagine glycosylation is present at N546. A helical membrane pass occupies residues D562 to A582. At R583 to G638 the chain is on the cytoplasmic side. Residues I639–L659 traverse the membrane as a helical segment. The Extracellular segment spans residues T660–N819. The L-glutamate site is built by A689, T690, and E738. A disulfide bridge links C750 with C804. N751 carries N-linked (GlcNAc...) asparagine glycosylation. Residues I820–G840 form a helical membrane-spanning segment. The Cytoplasmic portion of the chain corresponds to E841–A908. Phosphoserine; by PKC is present on residues S846 and S868. K886 is covalently cross-linked (Glycyl lysine isopeptide (Lys-Gly) (interchain with G-Cter in SUMO1)).

The protein belongs to the glutamate-gated ion channel (TC 1.A.10.1) family. GRIK2 subfamily. As to quaternary structure, homotetramer and heterotetramer with GRIK5. Tetramers may be formed by the dimerization of dimers. Assembles into a kainate-gated homomeric channel that does not bind AMPA. Can form functional heteromeric receptors with GRIK3, GRIK4 and GRIK5. Interacts with NETO2. Interacts with DLG4. Interacts with NETO2. Interacts (via C-terminus) with KLHL17 (via kelch repeats); the interaction targets GRIK2 for degradation via ubiquitin-proteasome pathway. Sumoylation mediates kainate receptor-mediated endocytosis and regulates synaptic transmission. Sumoylation is enhanced by PIAS3 and desumoylated by SENP1. Post-translationally, ubiquitinated. Ubiquitination regulates the GRIK2 levels at the synapse by leading kainate receptor degradation through proteasome. In terms of processing, phosphorylated by PKC at Ser-868 upon agonist activation, this directly enhance sumoylation.

It localises to the cell membrane. The protein resides in the postsynaptic cell membrane. It catalyses the reaction Ca(2+)(in) = Ca(2+)(out). It carries out the reaction Na(+)(in) = Na(+)(out). With respect to regulation, cold receptor activity activated by temperatures between 10-19 degrees Celsius. Ionotropic glutamate receptor that functions as a cation-permeable ligand-gated ion channel, gated by L-glutamate and the glutamatergic agonist kainic acid. L-glutamate acts as an excitatory neurotransmitter at many synapses in the central nervous system. Binding of the excitatory neurotransmitter L-glutamate induces a conformation change, leading to the opening of the cation channel, and thereby converts the chemical signal to an electrical impulse. The receptor then desensitizes rapidly and enters a transient inactive state, characterized by the presence of bound agonist. Modulates cell surface expression of NETO2. In association with GRIK3, involved in presynaptic facilitation of glutamate release at hippocampal mossy fiber synapses. Its function is as follows. Independent of its ionotropic glutamate receptor activity, acts as a thermoreceptor conferring sensitivity to cold temperatures. Functions in dorsal root ganglion neurons. The polypeptide is Glutamate receptor ionotropic, kainate 2 (GRIK2) (Macaca fascicularis (Crab-eating macaque)).